The primary structure comprises 150 residues: Large ribosomal subunit protein bL9 (150 aa).

The protein belongs to the bacterial ribosomal protein bL9 family.

Binds to the 23S rRNA. The protein is Large ribosomal subunit protein bL9 of Clavibacter sepedonicus (Clavibacter michiganensis subsp. sepedonicus).